The following is a 541-amino-acid chain: Protein MGF 505-10R (541 aa).

Belongs to the asfivirus MGF 505 family.

Plays a role in virus cell tropism, and may be required for efficient virus replication in macrophages. The polypeptide is Protein MGF 505-10R (Ornithodoros (relapsing fever ticks)).